A 283-amino-acid polypeptide reads, in one-letter code: uncharacterized protein (283 aa).

A signal peptide spans Met1 to Ala25. The N-palmitoyl cysteine moiety is linked to residue Cys26. The S-diacylglycerol cysteine moiety is linked to residue Cys26.

Belongs to the MG439/MG440 family.

The protein localises to the cell membrane. This is an uncharacterized protein from Mycoplasma pneumoniae (strain ATCC 29342 / M129 / Subtype 1) (Mycoplasmoides pneumoniae).